The chain runs to 353 residues: RNA 3'-terminal phosphate cyclase (353 aa).

Residues glutamine 103 and 297–301 (HLADQ) each bind ATP. Catalysis depends on histidine 322, which acts as the Tele-AMP-histidine intermediate.

This sequence belongs to the RNA 3'-terminal cyclase family. Type 1 subfamily.

Its subcellular location is the cytoplasm. The enzyme catalyses a 3'-end 3'-phospho-ribonucleotide-RNA + ATP = a 3'-end 2',3'-cyclophospho-ribonucleotide-RNA + AMP + diphosphate. Its function is as follows. Catalyzes the conversion of 3'-phosphate to a 2',3'-cyclic phosphodiester at the end of RNA. The mechanism of action of the enzyme occurs in 3 steps: (A) adenylation of the enzyme by ATP; (B) transfer of adenylate to an RNA-N3'P to produce RNA-N3'PP5'A; (C) and attack of the adjacent 2'-hydroxyl on the 3'-phosphorus in the diester linkage to produce the cyclic end product. The biological role of this enzyme is unknown but it is likely to function in some aspects of cellular RNA processing. This is RNA 3'-terminal phosphate cyclase from Salmonella heidelberg (strain SL476).